We begin with the raw amino-acid sequence, 140 residues long: uncharacterized protein (140 aa).

2 helical membrane-spanning segments follow: residues 4–21 (ILKIGILGFGAVFGYLFG) and 26–48 (LVKVLVCFIVADYISGLLASGYL).

Belongs to the bacteriophage holin family. Cp-1 holin subfamily.

Its subcellular location is the cell membrane. This is an uncharacterized protein from Listeria innocua serovar 6a (strain ATCC BAA-680 / CLIP 11262).